The chain runs to 481 residues: Cobyric acid synthase (481 aa).

A GATase cobBQ-type domain is found at 248-435 (ALTVAWLAFS…LHGMFGSDRF (188 aa)). Cys330 (nucleophile) is an active-site residue. His427 is an active-site residue.

Belongs to the CobB/CobQ family. CobQ subfamily.

It functions in the pathway cofactor biosynthesis; adenosylcobalamin biosynthesis. Its function is as follows. Catalyzes amidations at positions B, D, E, and G on adenosylcobyrinic A,C-diamide. NH(2) groups are provided by glutamine, and one molecule of ATP is hydrogenolyzed for each amidation. The chain is Cobyric acid synthase from Cereibacter sphaeroides (strain ATCC 17025 / ATH 2.4.3) (Rhodobacter sphaeroides).